Here is a 322-residue protein sequence, read N- to C-terminus: Sideroflexin-1 (322 aa).

Residue Ser-2 is modified to N-acetylserine. Residues 2–102 (SGEVPPNINI…MSAQVPMNMT (101 aa)) lie on the Mitochondrial matrix side of the membrane. Residues 103–120 (ITGCMMTFYRTTPAVLFW) form a helical membrane-spanning segment. The Mitochondrial intermembrane portion of the chain corresponds to 121–146 (QWINQSFNAVVNYTNRSGDAPLTVNE). Residues 147–167 (LGTAYVSATTGAVATALGLNA) traverse the membrane as a helical segment. Over 168–174 (LTKRVSP) the chain is Mitochondrial matrix. Residues 175 to 195 (LIGRFVPFAAVAAANCINIPL) traverse the membrane as a helical segment. The Mitochondrial intermembrane portion of the chain corresponds to 196–228 (MRQRELKVGIPVTDENGTRLGESTNAAKQAITQ). A helical membrane pass occupies residues 229 to 249 (VVISRILMAAPGMAIPPFIMN). Residues 250–266 (TLEKKAFLKRFPWMSAP) are Mitochondrial matrix-facing. The chain crosses the membrane as a helical span at residues 267–287 (IQVTLVGFCLVFATPLCCALF). Residues 288 to 322 (PQKSSMSVTSLEDELQASIQRTHPEIRRVYFNKGL) lie on the Mitochondrial intermembrane side of the membrane.

It belongs to the sideroflexin family. Widely expressed, with highest expression in kidney and liver.

Its subcellular location is the mitochondrion inner membrane. The catalysed reaction is L-serine(in) = L-serine(out). It catalyses the reaction L-alanine(in) = L-alanine(out). The enzyme catalyses L-cysteine(in) = L-cysteine(out). Amino acid transporter importing serine, an essential substrate of the mitochondrial branch of the one-carbon pathway, into mitochondria. Mitochondrial serine is then converted to glycine and formate, which exits to the cytosol where it is used to generate the charged folates that serve as one-carbon donors. May also transport other amino acids including alanine and cysteine. This is Sideroflexin-1 from Mus musculus (Mouse).